The following is a 278-amino-acid chain: 4-hydroxy-tetrahydrodipicolinate reductase (278 aa).

Residues 13–18 (GAAGKM) and 111–113 (GTT) contribute to the NAD(+) site. His167 functions as the Proton donor/acceptor in the catalytic mechanism. His168 contacts (S)-2,3,4,5-tetrahydrodipicolinate. The Proton donor role is filled by Lys171. A (S)-2,3,4,5-tetrahydrodipicolinate-binding site is contributed by 177 to 178 (GT).

This sequence belongs to the DapB family.

It is found in the cytoplasm. The catalysed reaction is (S)-2,3,4,5-tetrahydrodipicolinate + NAD(+) + H2O = (2S,4S)-4-hydroxy-2,3,4,5-tetrahydrodipicolinate + NADH + H(+). It carries out the reaction (S)-2,3,4,5-tetrahydrodipicolinate + NADP(+) + H2O = (2S,4S)-4-hydroxy-2,3,4,5-tetrahydrodipicolinate + NADPH + H(+). Its pathway is amino-acid biosynthesis; L-lysine biosynthesis via DAP pathway; (S)-tetrahydrodipicolinate from L-aspartate: step 4/4. Catalyzes the conversion of 4-hydroxy-tetrahydrodipicolinate (HTPA) to tetrahydrodipicolinate. This Nostoc sp. (strain PCC 7120 / SAG 25.82 / UTEX 2576) protein is 4-hydroxy-tetrahydrodipicolinate reductase.